We begin with the raw amino-acid sequence, 317 residues long: Probable F-box protein At2g36090 (317 aa).

The F-box domain maps to 25 to 74 (IESHILTRLDGATLASVSCASSHLHHLASNEILWSKICRSTWPSCSGGSR).

The polypeptide is Probable F-box protein At2g36090 (Arabidopsis thaliana (Mouse-ear cress)).